An 80-amino-acid chain; its full sequence is MAFLKKSLFLVLFLGIVSLSICEEEKREGEEEEKQEEENEELSEEELRERRALLDKLKSLGKVVGKVAIGVAQHYLNPQQ.

A signal peptide spans 1 to 22 (MAFLKKSLFLVLFLGIVSLSIC). The propeptide occupies 23-49 (EEEKREGEEEEKQEEENEELSEEELRE). The disordered stretch occupies residues 27–46 (REGEEEEKQEEENEELSEEE). The span at 30 to 44 (EEEEKQEEENEELSE) shows a compositional bias: acidic residues.

It belongs to the frog skin active peptide (FSAP) family. Dermaseptin subfamily. As to expression, expressed by the skin glands.

Its subcellular location is the secreted. In terms of biological role, has antibacterial activity. The polypeptide is Raniseptin-8 (Boana raniceps (Chaco tree frog)).